A 236-amino-acid chain; its full sequence is Aquaporin Z (236 aa).

2 helical membrane passes run 12–32 (FFGTFWLVLGGCGSAVLAAGV) and 37–57 (IGYAGVALAFGLTVLTMAYAV). The NPA 1 signature appears at 66 to 68 (NPA). 3 helical membrane-spanning segments follow: residues 92 to 112 (VVGAIVAAATLASIAQGVAGF), 136 to 156 (AALICEIVLSAGFVFVILGAT), and 163 to 183 (GFAPIPIGLALTLIHLISIPV). Positions 189–191 (NPA) match the NPA 2 motif. Residues 197-217 (ALFVGGWALEQLWLFWLAPIA) traverse the membrane as a helical segment.

This sequence belongs to the MIP/aquaporin (TC 1.A.8) family. Homotetramer.

It localises to the cell inner membrane. It catalyses the reaction H2O(in) = H2O(out). Channel that permits osmotically driven movement of water in both directions. It is involved in the osmoregulation and in the maintenance of cell turgor during volume expansion in rapidly growing cells. It mediates rapid entry or exit of water in response to abrupt changes in osmolarity. The sequence is that of Aquaporin Z from Bordetella bronchiseptica (strain ATCC BAA-588 / NCTC 13252 / RB50) (Alcaligenes bronchisepticus).